We begin with the raw amino-acid sequence, 114 residues long: Large ribosomal subunit protein uL22 (114 aa).

It belongs to the universal ribosomal protein uL22 family. In terms of assembly, part of the 50S ribosomal subunit.

This protein binds specifically to 23S rRNA; its binding is stimulated by other ribosomal proteins, e.g. L4, L17, and L20. It is important during the early stages of 50S assembly. It makes multiple contacts with different domains of the 23S rRNA in the assembled 50S subunit and ribosome. Functionally, the globular domain of the protein is located near the polypeptide exit tunnel on the outside of the subunit, while an extended beta-hairpin is found that lines the wall of the exit tunnel in the center of the 70S ribosome. This chain is Large ribosomal subunit protein uL22, found in Aeromonas salmonicida (strain A449).